The chain runs to 512 residues: MEEFPGYFELDRSRQHDFLYPLIFRESIYALAHDHGLNRNRSTLFENEVDYDKKYSLIIVKRLITRMYQRNHLIISANGSVQNPFLGHNKNLYSKILSEGFAVIVEIPFSLRVLSSFERKEKDIAKSPTLRSIHSIFPFLEDQFSHLDYLSHVLIPYPIHLEIAVQTLRYWVKDASSLHLLRIFLHEYWNSFSTPKKHITLFLKGNSRFFLFLYNSYVCEYESIFLFIRNQSSHFQSTSSGVFFERILFYVKIDHLVEVFVGTDFLDIRSFFKDPNMHYVRYQGKSILASKDTPLLMNKWKYYLVNLWQYHFSVWSQPGRININQLGKYSLDFLGYFSNVQLKSSVVRNQTLENSFLINNAMKKLETTVPILPLIGSLSRAKFCNALGHPISKPTRTDSSDSDIIDRFVRICRNLSHYHSGSSKKKSLYRIKYILRLSCVKTLARKHKSSVRAFLKRLGSELGDEFLTEEGVVLAVIFPKASGRLYRGRIWYLDIPCINDWVGDAEGSIFTK.

This sequence belongs to the intron maturase 2 family. MatK subfamily.

The protein resides in the plastid. It is found in the chloroplast. Usually encoded in the trnK tRNA gene intron. Probably assists in splicing its own and other chloroplast group II introns. The sequence is that of Maturase K from Oenothera parviflora (Small-flowered evening primrose).